Reading from the N-terminus, the 294-residue chain is 33 kDa chaperonin (294 aa).

2 disulfides stabilise this stretch: C235-C237 and C268-C271.

Belongs to the HSP33 family. Post-translationally, under oxidizing conditions two disulfide bonds are formed involving the reactive cysteines. Under reducing conditions zinc is bound to the reactive cysteines and the protein is inactive.

Its subcellular location is the cytoplasm. In terms of biological role, redox regulated molecular chaperone. Protects both thermally unfolding and oxidatively damaged proteins from irreversible aggregation. Plays an important role in the bacterial defense system toward oxidative stress. The protein is 33 kDa chaperonin of Proteus mirabilis (strain HI4320).